The chain runs to 338 residues: Nodulation outer protein L (338 aa).

Residues 1 to 14 (MDINSTSPLNASPQ) show a composition bias toward polar residues. Disordered stretches follow at residues 1 to 48 (MDIN…LPQV), 85 to 158 (TRER…DLET), 187 to 209 (SPAP…PHAR), and 230 to 259 (PQAG…SSAG). Positions 85–97 (TRERSPHPSEQRP) are enriched in basic and acidic residues. Residues 126–138 (VGPSRSGPSQAGL) show a composition bias toward polar residues. Polar residues predominate over residues 242-258 (SGPSQARPSHAWPSSSA).

The protein resides in the secreted. Functionally, putative symbiotic effector that modulates nodulation in legumes. When delivered into the plant cell, modulates the activity of signal transduction pathways that culminate in activation of PR proteins. The polypeptide is Nodulation outer protein L (nopL) (Sinorhizobium fredii (strain NBRC 101917 / NGR234)).